Reading from the N-terminus, the 235-residue chain is 2-C-methyl-D-erythritol 4-phosphate cytidylyltransferase (235 aa).

This sequence belongs to the IspD/TarI cytidylyltransferase family. IspD subfamily.

It carries out the reaction 2-C-methyl-D-erythritol 4-phosphate + CTP + H(+) = 4-CDP-2-C-methyl-D-erythritol + diphosphate. Its pathway is isoprenoid biosynthesis; isopentenyl diphosphate biosynthesis via DXP pathway; isopentenyl diphosphate from 1-deoxy-D-xylulose 5-phosphate: step 2/6. Functionally, catalyzes the formation of 4-diphosphocytidyl-2-C-methyl-D-erythritol from CTP and 2-C-methyl-D-erythritol 4-phosphate (MEP). This Ectopseudomonas mendocina (strain ymp) (Pseudomonas mendocina) protein is 2-C-methyl-D-erythritol 4-phosphate cytidylyltransferase.